Consider the following 606-residue polypeptide: MNMFSSLSLVTLLLLTMPIMMMSFNTYKPSNYPLYVKTAISYAFITSMIPTMMFIHSGQELIISNWHWLTIQTLKLSLSFKMDYFSMMFIPVALFVTWSIMEFSMWYMYSDPNINKFFKYLLLFLITMLILVTANNLFQLFIGWEGVGIMSFLLIGWWYGRADANTAALQAILYNRIGDIGFILAMAWFLTNLNTWDLQQIFMLNPSDSNMPLIGLALAATGKSAQFGLHPWLPSAMEGPTPVSALLHSSTMVVAGIFLLIRFYPLTENNKYIQSITLCLGAITTLFTAMCALTQNDIKKIIAFSTSSQLGLMMVTIGINQPYLAFLHICTHAFFKAMLFMCSGSIIHSLNDEQDIRKMGGLFKAMPFTTTALIVGSLALTGMPFLTGFYSKDLIIEAANTSYTNAWALLMTLIATSFTAIYSTRIIFFALLGQPRFPTLVNINENNPLLINSIKRLLIGSLFAGYIISNNIPPTTIPQMTMPYYLKTTALIVTILGFILALEISNMTKNLKYHYPSNAFKFSTLLGYFPTIMHRLAPYMNLSMSQKSASSLLDLIWLEAILPKTISLAQMKASTLVTNQKGLIKLYFLSFLITILISMILFNFHE.

M1 is subject to N-formylmethionine. A run of 15 helical transmembrane segments spans residues 4–24, 43–63, 87–107, 117–137, 140–160, 171–191, 213–233, 241–261, 273–293, 310–330, 366–386, 413–433, 457–477, 482–502, and 582–602; these read FSSL…MMSF, AFIT…ELII, MMFI…SMWY, FFKY…ANNL, LFIG…WWYG, AILY…WFLT, LIGL…HPWL, TPVS…FLLI, IQSI…MCAL, LGLM…LHIC, MPFT…MPFL, LIAT…ALLG, LLIG…PTTI, MPYY…ILAL, and GLIK…MILF.

As to quaternary structure, core subunit of respiratory chain NADH dehydrogenase (Complex I) which is composed of 45 different subunits.

Its subcellular location is the mitochondrion inner membrane. The catalysed reaction is a ubiquinone + NADH + 5 H(+)(in) = a ubiquinol + NAD(+) + 4 H(+)(out). Functionally, core subunit of the mitochondrial membrane respiratory chain NADH dehydrogenase (Complex I) which catalyzes electron transfer from NADH through the respiratory chain, using ubiquinone as an electron acceptor. Essential for the catalytic activity and assembly of complex I. The protein is NADH-ubiquinone oxidoreductase chain 5 (MT-ND5) of Bos taurus (Bovine).